Consider the following 190-residue polypeptide: CASP-like protein 1U3 (190 aa).

The Cytoplasmic segment spans residues 1–24 (MNGATVQPSYKEAGPVRYHPMHDC). A helical membrane pass occupies residues 25–45 (LSLILRLLTLGATIAAIVAML). Residues 46-70 (KSTQTVPTLLGPHTARWKDFPAFEW) are Extracellular-facing. Residues 71–91 (FVIGNSIVLVYAALGTLAACL) form a helical membrane-spanning segment. The Cytoplasmic segment spans residues 92 to 113 (SLFTRRGPLSYTKTAWLTFLCD). The helical transmembrane segment at 114-134 (FICSCALISAGSTALGVAWIG) threads the bilayer. The Extracellular segment spans residues 135-158 (KHGQHSAFWNAVCPTVDRFCDYVQ). Residues 159-179 (GALIATLCGFIFQALSTVIAA) traverse the membrane as a helical segment. Residues 180-190 (SALHNLATHRH) are Cytoplasmic-facing.

Belongs to the Casparian strip membrane proteins (CASP) family. As to quaternary structure, homodimer and heterodimers.

Its subcellular location is the cell membrane. The sequence is that of CASP-like protein 1U3 from Physcomitrium patens (Spreading-leaved earth moss).